The primary structure comprises 364 residues: Protein L-Myc (364 aa).

Disordered regions lie at residues 41 to 81 (TSPP…HSKG), 111 to 172 (DRLA…EIDV), and 219 to 285 (PPES…KRKN). Residues 228–245 (ASERGPQEEVLERDAAGE) are compositionally biased toward basic and acidic residues. The bHLH domain maps to 281-333 (TKRKNHNFLERKRRNDLRSRFLALRDQVPTLASCSKAPKVVILSKALEYLQAL). The interval 333-361 (LVGAEKRMATEKRQLRCRQQQLQKRIAYL) is leucine-zipper.

As to quaternary structure, efficient DNA binding requires dimerization with another bHLH protein. Binds DNA as a heterodimer with MAX.

It is found in the nucleus. This chain is Protein L-Myc (MYCL), found in Homo sapiens (Human).